Consider the following 688-residue polypeptide: Elongation factor G (688 aa).

Residues 8–282 (EKTRNIGIIA…AIVDYLPAPC (275 aa)) form the tr-type G domain. GTP-binding positions include 17–24 (AHIDAGKT), 81–85 (DTPGH), and 135–138 (NKMD).

It belongs to the TRAFAC class translation factor GTPase superfamily. Classic translation factor GTPase family. EF-G/EF-2 subfamily.

It localises to the cytoplasm. Functionally, catalyzes the GTP-dependent ribosomal translocation step during translation elongation. During this step, the ribosome changes from the pre-translocational (PRE) to the post-translocational (POST) state as the newly formed A-site-bound peptidyl-tRNA and P-site-bound deacylated tRNA move to the P and E sites, respectively. Catalyzes the coordinated movement of the two tRNA molecules, the mRNA and conformational changes in the ribosome. The polypeptide is Elongation factor G (Onion yellows phytoplasma (strain OY-M)).